We begin with the raw amino-acid sequence, 354 residues long: Probable cinnamyl alcohol dehydrogenase 5 (354 aa).

Cysteine 43 serves as a coordination point for Zn(2+). Serine 45 contributes to the NADP(+) binding site. Histidine 65, glutamate 66, cysteine 96, cysteine 99, cysteine 102, cysteine 110, and cysteine 159 together coordinate Zn(2+). NADP(+)-binding positions include threonine 163, 184–189 (GLGGLG), 207–212 (SSSPGK), threonine 247, glycine 271, and 294–296 (SCI).

The protein belongs to the zinc-containing alcohol dehydrogenase family. In terms of assembly, homodimer. Zn(2+) is required as a cofactor.

It catalyses the reaction (E)-cinnamyl alcohol + NADP(+) = (E)-cinnamaldehyde + NADPH + H(+). The catalysed reaction is (E)-coniferol + NADP(+) = (E)-coniferaldehyde + NADPH + H(+). The enzyme catalyses (E)-sinapyl alcohol + NADP(+) = (E)-sinapaldehyde + NADPH + H(+). It carries out the reaction (E)-4-coumaroyl alcohol + NADP(+) = (E)-4-coumaraldehyde + NADPH + H(+). It catalyses the reaction (E)-caffeyl alcohol + NADP(+) = (E)-caffeyl aldehyde + NADPH + H(+). It functions in the pathway aromatic compound metabolism; phenylpropanoid biosynthesis. Functionally, involved in lignin biosynthesis. Catalyzes the final step specific for the production of lignin monomers. Catalyzes the NADPH-dependent reduction of coniferaldehyde, 5-hydroxyconiferaldehyde, sinapaldehyde, 4-coumaraldehyde and caffeyl aldehyde to their respective alcohols. This chain is Probable cinnamyl alcohol dehydrogenase 5, found in Oryza sativa subsp. japonica (Rice).